We begin with the raw amino-acid sequence, 274 residues long: Protein STAY-GREEN, chloroplastic (274 aa).

The transit peptide at 1-48 (MAAATSTMSLIPPITQQQRWHAADSLVVLASRRHDSRRRRRCRYVVPR) directs the protein to the chloroplast.

It belongs to the staygreen family.

Its subcellular location is the plastid. The protein resides in the chloroplast. Involved in the disassembling mechanism of the intact light-harvesting complex of photosystem II (LHCPII) in the thylakoid membranes. Required to trigger chlorophyll degradation during natural and dark-induced leaf senescence. The protein is Protein STAY-GREEN, chloroplastic (SGR) of Oryza sativa subsp. indica (Rice).